The primary structure comprises 682 residues: MSRKQLALLEPTLVRQALLDAVKKLSPMVQWRNPVMFIVWVGSLLTTLLAIAMAGGALTGSATFTAAVSIWLWFTVLFANFAEAMAEGRSKAQANSLKGVKKTAFARKLRAPQHDATVDHVPAEDLRKGDVVLVEAGDIIPCDGEVIEGGASVDESAITGESAPVIRESGGDFASVTGGTRILSDWLVIRCSVNPGETFLDRMIAMVEGAQRRKTPNEIALTILLIALTLVFLLATATIWPFSAWSGNAVSVTVLVALLVCLIPTTIGGLLSAIGVAGMSRMLGANVIATSGRAVEAAGDVDVLLLDKTGTITLGNRQASAFLPARGVEERTLADAAQLSSLADETPEGRSIVVLAKQRFNLRERDLQSLHATFVPFTAQTRMSGINIDQRMIRKGSVDAIRRHVEANGGHFPADVDKQVEEVARQGATPLVVAEGEKVLGIISLKDIVKGGIKERFAQLRKMGIKTVMITGDNRLTAAAIAAEAGVDDFLAEATPEAKLALIRQYQSEGRLVAMTGDGTNDAPALAQADVAVAMNSGTQAAKEAGNMVDLDSNPTKLIEVVHIGKQMLMTRGSLTTFSIANDVAKYFAIIPAAFAAVYPQLAMLNVMGLHSPSSAILSAVIFNALIIVFLIPLALKGVSYRPLSASAMLRRNLWIYGLGGLLVPFIGIKAIDLLLTLSGLV.

The next 4 membrane-spanning stretches (helical) occupy residues 35-55, 62-82, 219-239, and 254-274; these read VMFI…AMAG, ATFT…ANFA, IALT…TATI, and VLVA…LSAI. The 4-aspartylphosphate intermediate role is filled by aspartate 307. Residues aspartate 344, glutamate 348, 377-384, and lysine 395 each bind ATP; that span reads FTAQTRMS. Residues aspartate 518 and aspartate 522 each coordinate Mg(2+). Helical transmembrane passes span 588–608, 616–636, and 656–676; these read FAII…LNVM, AILS…PLAL, and IYGL…DLLL.

It belongs to the cation transport ATPase (P-type) (TC 3.A.3) family. Type IA subfamily. In terms of assembly, the system is composed of three essential subunits: KdpA, KdpB and KdpC.

It is found in the cell inner membrane. It catalyses the reaction K(+)(out) + ATP + H2O = K(+)(in) + ADP + phosphate + H(+). Its function is as follows. Part of the high-affinity ATP-driven potassium transport (or Kdp) system, which catalyzes the hydrolysis of ATP coupled with the electrogenic transport of potassium into the cytoplasm. This subunit is responsible for energy coupling to the transport system and for the release of the potassium ions to the cytoplasm. In Klebsiella pneumoniae (strain 342), this protein is Potassium-transporting ATPase ATP-binding subunit.